The primary structure comprises 152 residues: MSETKHTLHTPGWVSDFQKFIMRGNVLDLAVGVVIGAAFSAIVGSAVKDILTPFIGLITGGVDFSNLFITLKGPVKDTLAEAQKAGAVTVNIGVFLNAVIQFLIIAFFIFWLTRILSKLSRKQEAAPAAPPAPTKEEVLLTEIRDLLAQKNS.

A run of 3 helical transmembrane segments spans residues 26–46 (VLDL…VGSA), 50–70 (ILTP…LFIT), and 92–112 (IGVF…IFWL).

Belongs to the MscL family. As to quaternary structure, homopentamer.

It localises to the cell inner membrane. In terms of biological role, channel that opens in response to stretch forces in the membrane lipid bilayer. May participate in the regulation of osmotic pressure changes within the cell. The sequence is that of Large-conductance mechanosensitive channel from Gluconobacter oxydans (strain 621H) (Gluconobacter suboxydans).